The primary structure comprises 43 residues: Protein PsbN (43 aa).

The chain crosses the membrane as a helical span at residues 7–27 (ITIFLSCFLVGVTGYALYTAF).

It belongs to the PsbN family.

The protein localises to the plastid. Its subcellular location is the chloroplast thylakoid membrane. May play a role in photosystem I and II biogenesis. The protein is Protein PsbN of Klebsormidium bilatum (Filamentous green alga).